A 206-amino-acid polypeptide reads, in one-letter code: FMN-dependent NADH:quinone oxidoreductase (206 aa).

Residues serine 9, 15 to 17 (SVS), 95 to 98 (MYNF), and 139 to 142 (SRGG) each bind FMN.

It belongs to the azoreductase type 1 family. As to quaternary structure, homodimer. Requires FMN as cofactor.

The enzyme catalyses 2 a quinone + NADH + H(+) = 2 a 1,4-benzosemiquinone + NAD(+). It catalyses the reaction N,N-dimethyl-1,4-phenylenediamine + anthranilate + 2 NAD(+) = 2-(4-dimethylaminophenyl)diazenylbenzoate + 2 NADH + 2 H(+). In terms of biological role, quinone reductase that provides resistance to thiol-specific stress caused by electrophilic quinones. Functionally, also exhibits azoreductase activity. Catalyzes the reductive cleavage of the azo bond in aromatic azo compounds to the corresponding amines. This is FMN-dependent NADH:quinone oxidoreductase from Legionella pneumophila subsp. pneumophila (strain Philadelphia 1 / ATCC 33152 / DSM 7513).